Here is a 78-residue protein sequence, read N- to C-terminus: Large ribosomal subunit protein bL28 (78 aa).

A disordered region spans residues 1-28; it reads MSRRCQVRGTKPEFGNNVSHSQRHTKRR.

It belongs to the bacterial ribosomal protein bL28 family.

In Cutibacterium acnes (strain DSM 16379 / KPA171202) (Propionibacterium acnes), this protein is Large ribosomal subunit protein bL28.